The sequence spans 542 residues: CTP synthase (542 aa).

The tract at residues 1-265 (MARYVFITGG…DSEVLSAFGI (265 aa)) is amidoligase domain. Position 13 (S13) interacts with CTP. A UTP-binding site is contributed by S13. Position 14 to 19 (14 to 19 (SLGKGI)) interacts with ATP. Y54 is an L-glutamine binding site. An ATP-binding site is contributed by D71. Mg(2+)-binding residues include D71 and E139. CTP-binding positions include 146-148 (DIE), 186-191 (KTKPTQ), and K222. UTP contacts are provided by residues 186-191 (KTKPTQ) and K222. The Glutamine amidotransferase type-1 domain maps to 291–541 (TIAVVGKYTG…IEAAIEQSRL (251 aa)). Position 353 (G353) interacts with L-glutamine. The active-site Nucleophile; for glutamine hydrolysis is C380. L-glutamine contacts are provided by residues 381–384 (FGMQ), E404, and R469. Residues H514 and E516 contribute to the active site.

This sequence belongs to the CTP synthase family. In terms of assembly, homotetramer.

The catalysed reaction is UTP + L-glutamine + ATP + H2O = CTP + L-glutamate + ADP + phosphate + 2 H(+). The enzyme catalyses L-glutamine + H2O = L-glutamate + NH4(+). It carries out the reaction UTP + NH4(+) + ATP = CTP + ADP + phosphate + 2 H(+). It participates in pyrimidine metabolism; CTP biosynthesis via de novo pathway; CTP from UDP: step 2/2. Allosterically activated by GTP, when glutamine is the substrate; GTP has no effect on the reaction when ammonia is the substrate. The allosteric effector GTP functions by stabilizing the protein conformation that binds the tetrahedral intermediate(s) formed during glutamine hydrolysis. Inhibited by the product CTP, via allosteric rather than competitive inhibition. Catalyzes the ATP-dependent amination of UTP to CTP with either L-glutamine or ammonia as the source of nitrogen. Regulates intracellular CTP levels through interactions with the four ribonucleotide triphosphates. This chain is CTP synthase, found in Brucella canis (strain ATCC 23365 / NCTC 10854 / RM-666).